The chain runs to 205 residues: Recombination protein RecR (205 aa).

The segment at 58–75 (CSLCQNVTDKEIDPCNIC) adopts a C4-type zinc-finger fold. A Toprim domain is found at 83-182 (RVVCVVEAPN…KVTRIARGIP (100 aa)).

Belongs to the RecR family.

In terms of biological role, may play a role in DNA repair. It seems to be involved in an RecBC-independent recombinational process of DNA repair. It may act with RecF and RecO. The chain is Recombination protein RecR from Chloroherpeton thalassium (strain ATCC 35110 / GB-78).